Reading from the N-terminus, the 277-residue chain is Probable diphthine methyl ester synthase (277 aa).

S-adenosyl-L-methionine-binding positions include leucine 9, aspartate 89, glycine 92, 117-118 (SV), leucine 168, leucine 227, and histidine 252.

This sequence belongs to the diphthine synthase family.

It carries out the reaction 2-[(3S)-amino-3-carboxypropyl]-L-histidyl-[translation elongation factor 2] + 4 S-adenosyl-L-methionine = diphthine methyl ester-[translation elongation factor 2] + 4 S-adenosyl-L-homocysteine + 3 H(+). It participates in protein modification; peptidyl-diphthamide biosynthesis. S-adenosyl-L-methionine-dependent methyltransferase that catalyzes four methylations of the modified target histidine residue in translation elongation factor 2 (EF-2), to form an intermediate called diphthine methyl ester. The four successive methylation reactions represent the second step of diphthamide biosynthesis. This chain is Probable diphthine methyl ester synthase, found in Arabidopsis thaliana (Mouse-ear cress).